A 304-amino-acid chain; its full sequence is Glutaminase (304 aa).

Residues Ser-63, Asn-113, Glu-157, Asn-164, Tyr-188, Tyr-240, and Val-258 each contribute to the substrate site.

This sequence belongs to the glutaminase family. As to quaternary structure, homotetramer.

It carries out the reaction L-glutamine + H2O = L-glutamate + NH4(+). The polypeptide is Glutaminase (Paraburkholderia phytofirmans (strain DSM 17436 / LMG 22146 / PsJN) (Burkholderia phytofirmans)).